Here is a 473-residue protein sequence, read N- to C-terminus: MTVSYTLKVAEARFGGFSGLLLRWRGSIYKLLYKEFLLFGALYAVLSITYRLLLTQEQRYVYAQVARYCNRSADLIPLSFVLGFYVTLVVNRWWSQYTSIPLPDQLMCVISASVHGVDQRGRLLRRTLIRYANLASVLVLRSVSTRVLKRFPTMEHVVDAGFMSQEERKKFESLKSDFNKYWVPCVWFTNLAAQARRDGRIRDDIALCLLLEELNKYRAKCSMLFHYDWISIPLVYTQVVTIAVYSFFALSLVGRQFVEPEAGAAKPQKLLKPGQEPAPALGDPDMYVPLTTLLQFFFYAGWLKVAEQIINPFGEDDDDFETNQLIDRNLQVSLLSVDEMYQNLPPAEKDQYWDEDQPQPPYTVATAAESLRPSFLGSTFNLRMSDDPEQSLQVEASPGSGRPAPAAQTPLLGRFLGVGAPSPAISLRNFGRVRGTPRPPHLLRFRAEEGGDPEAAARIEEESAESGDEALEP.

The Cytoplasmic segment spans residues 1 to 31 (MTVSYTLKVAEARFGGFSGLLLRWRGSIYKL). Ala10 contributes to the Ca(2+) binding site. A helical membrane pass occupies residues 32–51 (LYKEFLLFGALYAVLSITYR). Topologically, residues 52-60 (LLLTQEQRY) are extracellular. Residues 61–82 (VYAQVARYCNRSADLIPLSFVL) form a helical membrane-spanning segment. Residues 83-237 (GFYVTLVVNR…DWISIPLVYT (155 aa)) are Cytoplasmic-facing. The helical transmembrane segment at 238–255 (QVVTIAVYSFFALSLVGR) threads the bilayer. Residues 256–289 (QFVEPEAGAAKPQKLLKPGQEPAPALGDPDMYVP) lie on the Extracellular side of the membrane. The helical transmembrane segment at 290 to 303 (LTTLLQFFFYAGWL) threads the bilayer. The Cytoplasmic portion of the chain corresponds to 304-473 (KVAEQIINPF…AESGDEALEP (170 aa)). Residues Gln308, Asn311, Asp316, and Asp319 each coordinate Ca(2+). Disordered stretches follow at residues 379–408 (TFNL…PAAQ) and 428–473 (RNFG…ALEP). Positions 396–407 (ASPGSGRPAPAA) are enriched in low complexity. Positions 445–461 (FRAEEGGDPEAAARIEE) are enriched in basic and acidic residues. Positions 462–473 (ESAESGDEALEP) are enriched in acidic residues.

The protein belongs to the anion channel-forming bestrophin (TC 1.A.46) family. Calcium-sensitive chloride channel subfamily. Predominantly found in colon and the weakly in fetal brain, spinal cord, retina, lung, trachea, testis and placenta.

The protein resides in the cell membrane. The enzyme catalyses chloride(in) = chloride(out). It carries out the reaction hydrogencarbonate(in) = hydrogencarbonate(out). In terms of biological role, ligand-gated anion channel that allows the movement of anions across cell membranes when activated by Calcium (Ca2+). Mediates the movement of hydrogencarbonate and chloride. The polypeptide is Bestrophin-4 (Homo sapiens (Human)).